Here is a 364-residue protein sequence, read N- to C-terminus: Ribosomal RNA large subunit methyltransferase M (364 aa).

Residues serine 187, cysteine 220–glycine 223, aspartate 239, aspartate 259, and aspartate 276 contribute to the S-adenosyl-L-methionine site. Lysine 305 serves as the catalytic Proton acceptor.

This sequence belongs to the class I-like SAM-binding methyltransferase superfamily. RNA methyltransferase RlmE family. RlmM subfamily. Monomer.

It is found in the cytoplasm. It catalyses the reaction cytidine(2498) in 23S rRNA + S-adenosyl-L-methionine = 2'-O-methylcytidine(2498) in 23S rRNA + S-adenosyl-L-homocysteine + H(+). Catalyzes the 2'-O-methylation at nucleotide C2498 in 23S rRNA. The protein is Ribosomal RNA large subunit methyltransferase M of Aeromonas hydrophila subsp. hydrophila (strain ATCC 7966 / DSM 30187 / BCRC 13018 / CCUG 14551 / JCM 1027 / KCTC 2358 / NCIMB 9240 / NCTC 8049).